Reading from the N-terminus, the 382-residue chain is Cytochrome b (382 aa).

4 helical membrane passes run 36-56 (FGSL…FLTM), 80-101 (WLIR…YLHI), 116-136 (WFIG…GYVL), and 181-201 (FYTF…IHLL). The heme b site is built by His-86 and His-100. Residues His-185 and His-199 each coordinate heme b. Position 204 (His-204) interacts with a ubiquinone. 4 consecutive transmembrane segments (helical) span residues 229-249 (YKDL…TLSN), 291-311 (LGGV…PLTF), 323-343 (INQF…WIGA), and 350-370 (YIIT…LNPL).

This sequence belongs to the cytochrome b family. As to quaternary structure, the main subunits of complex b-c1 are: cytochrome b, cytochrome c1 and the Rieske protein. Heme b is required as a cofactor.

It localises to the mitochondrion inner membrane. Component of the ubiquinol-cytochrome c reductase complex (complex III or cytochrome b-c1 complex) that is part of the mitochondrial respiratory chain. The b-c1 complex mediates electron transfer from ubiquinol to cytochrome c. Contributes to the generation of a proton gradient across the mitochondrial membrane that is then used for ATP synthesis. The chain is Cytochrome b (MT-CYB) from Samia ricini (Indian eri silkmoth).